The sequence spans 420 residues: Ribosome biogenesis protein WDR12 homolog (420 aa).

The tract at residues 10 to 92 (VQVHLKTKQE…EDAIEIEYVE (83 aa)) is ubiquitin-like (UBL) domain. 7 WD repeats span residues 104–142 (LHDDWVSAVKASGKWILSGCYDNTLNLWTNKGKHILTIS), 143–185 (GHTA…NSVE), 192–231 (GHERGVDSVSVSPDGLRFATGSWDTMLKVWSAEVEDAVEG), 250–288 (GHRESVSAVQWMDASTLLTGSWDHTLKVWDLSLEGIKTE), 290–329 (STNKSIFDASYSKLNRLILTASADKNLRLYDPRTNQGSVV), 335–375 (GHNA…APLY), and 379–417 (GHGEKVLDIDWSNPKYIVSGGVDNTVRVFKSRKALADDA).

Belongs to the WD repeat WDR12/YTM1 family.

It is found in the nucleus. The protein localises to the nucleolus. The protein resides in the nucleoplasm. Functionally, required for maturation of ribosomal RNAs and formation of the large ribosomal subunit. The polypeptide is Ribosome biogenesis protein WDR12 homolog (Drosophila yakuba (Fruit fly)).